Reading from the N-terminus, the 1905-residue chain is Low-density lipoprotein receptor-related protein 4 (1905 aa).

Residues 1 to 20 (MRRQWGALLLGALLCAHGLA) form the signal peptide. Residues 21–1725 (SSPECACGRS…AAPGEGLHIS (1705 aa)) are Extracellular-facing. LDL-receptor class A domains are found at residues 26–67 (ACGR…DGCI), 70–106 (TCSPLDFHCDNGKCIRRSWVCDGDNDCEDDSDEQDCP), 109–144 (ECEEDEFPCQNGYCIRSLWHCDGDNDCGDNSDEQCD), 147–183 (KCSDKEFRCSDGSCIAEHWYCDGDTDCKDGSDEENCP), 190–226 (PCNLEEFQCAYGRCILDIYHCDGDDDCGDWSDESDCS), 230–266 (PCRSGEFMCDSGLCINAGWRCDGDADCDDQSDERNCT), 269–305 (MCTAEQFRCHSGRCVRLSWRCDGEDDCADNSDEENCE), and 311–350 (QCALDQFLCWNGRCIGQRKLCNGVNDCGDNSDESPQQNCR). Disulfide bonds link C27–C44, C34–C57, C51–C66, C71–C83, C78–C96, C90–C105, C110–C122, C117–C135, C129–C143, C148–C160, C155–C173, C167–C182, C191–C203, C198–C216, C210–C225, C231–C243, C238–C256, C250–C265, C270–C282, C277–C295, C289–C304, C312–C324, C319–C337, C331–C349, C358–C369, C365–C378, C380–C393, C399–C409, C405–C418, and C420–C433. A glycan (N-linked (GlcNAc...) asparagine) is linked at N264. One can recognise an EGF-like 1; calcium-binding domain in the interval 354 to 394 (GEENCNVNNGGCAQKCQMVRGAVQCTCHTGYRLTEDGHTCQ). An EGF-like 2; calcium-binding domain is found at 395–434 (DVNECAEEGYCSQGCTNSEGAFQCWCETGYELRPDRRSCK). LDL-receptor class B repeat units follow at residues 480 to 522 (ELVF…DWVH), 523 to 565 (DKLY…HPME), 566 to 609 (GTIY…DYAG), 610 to 652 (RRMY…FEDS), and 653 to 693 (LYWT…LHPQ). N498 is a glycosylation site (N-linked (GlcNAc...) asparagine). One can recognise an EGF-like 3 domain in the interval 698–737 (GKNRCGDNNGGCTHLCLPSGQNYTCACPTGFRKISSHACA). 3 disulfides stabilise this stretch: C702–C713, C709–C722, and C724–C736. N-linked (GlcNAc...) asparagine glycosylation is present at N719. LDL-receptor class B repeat units lie at residues 785–827 (DHVY…DWVT), 828–870 (NKLY…EPMG), 871–914 (GYMY…DYGS), 915–956 (QRLY…LYGE), and 957–998 (RIYW…FHRR). A glycan (N-linked (GlcNAc...) asparagine) is linked at N901. A glycan (N-linked (GlcNAc...) asparagine) is linked at N1077. LDL-receptor class B repeat units follow at residues 1093-1135 (GKVY…DAIG), 1136-1178 (RKVY…YHEM), 1179-1222 (GFMY…DKAS), 1223-1263 (SQLL…LLDS), 1264-1306 (YIYW…DRAQ), 1397-1439 (GKVY…DWVA), 1440-1482 (RNLY…FPRK), 1483-1526 (GYLF…DYDT), 1527-1568 (RRIY…QDRW), and 1569-1610 (IYWT…SPQR). Residues N1415 and N1467 are each glycosylated (N-linked (GlcNAc...) asparagine). The interval 1659-1686 (PRATGMSEKSPVLPNTPPTTLYSSTTRT) is disordered. Low complexity predominate over residues 1676 to 1686 (PTTLYSSTTRT). The chain crosses the membrane as a helical span at residues 1726–1746 (YAIGGLLSILLILVVIAALML). The Cytoplasmic segment spans residues 1747 to 1905 (YRHKKSKFTD…ERKLSSESQV (159 aa)). The short motif at 1766 to 1769 (NPSY) is the Endocytosis signal element. The tract at residues 1852-1905 (ASSGSLDDTETEQLLQEEQSECSSVHTAATPERRGSLPDTGWKHERKLSSESQV) is disordered. The segment covering 1882-1905 (PERRGSLPDTGWKHERKLSSESQV) has biased composition (basic and acidic residues).

Belongs to the LDLR family. In terms of assembly, homooligomer. Interacts with MUSK; the heterodimer forms an AGRIN receptor complex that binds AGRIN resulting in activation of MUSK. Interacts (via the extracellular domain) with SOST; the interaction facilitates the inhibition of Wnt signaling. Interacts with MESD; the interaction promotes glycosylation of LRP4 and its cell-surface expression. In terms of tissue distribution, expressed in bone; present in osteoblasts and osteocytes. No expression is observed in osteoclast. Expressed in several regions of the brain.

Its subcellular location is the cell membrane. Mediates SOST-dependent inhibition of bone formation. Functions as a specific facilitator of SOST-mediated inhibition of Wnt signaling. Plays a key role in the formation and the maintenance of the neuromuscular junction (NMJ), the synapse between motor neuron and skeletal muscle. Directly binds AGRIN and recruits it to the MUSK signaling complex. Mediates the AGRIN-induced phosphorylation of MUSK, the kinase of the complex. The activation of MUSK in myotubes induces the formation of NMJ by regulating different processes including the transcription of specific genes and the clustering of AChR in the postsynaptic membrane. Alternatively, may be involved in the negative regulation of the canonical Wnt signaling pathway, being able to antagonize the LRP6-mediated activation of this pathway. More generally, has been proposed to function as a cell surface endocytic receptor binding and internalizing extracellular ligands for degradation by lysosomes. May play an essential role in the process of digit differentiation. This Homo sapiens (Human) protein is Low-density lipoprotein receptor-related protein 4 (LRP4).